The chain runs to 476 residues: Amidophosphoribosyltransferase (476 aa).

A propeptide spanning residues 1–11 (MLAEIKGLNEE) is cleaved from the precursor. Cysteine 12 functions as the Nucleophile in the catalytic mechanism. The 220-residue stretch at 12 to 231 (CGVFGIWGHE…PGEMLIINDE (220 aa)) folds into the Glutamine amidotransferase type-2 domain. Cysteine 247 is a binding site for [4Fe-4S] cluster. Mg(2+) contacts are provided by serine 294, aspartate 356, and aspartate 357. Positions 393, 448, and 451 each coordinate [4Fe-4S] cluster.

The protein in the C-terminal section; belongs to the purine/pyrimidine phosphoribosyltransferase family. Homotetramer. Mg(2+) serves as cofactor. Requires [4Fe-4S] cluster as cofactor.

It catalyses the reaction 5-phospho-beta-D-ribosylamine + L-glutamate + diphosphate = 5-phospho-alpha-D-ribose 1-diphosphate + L-glutamine + H2O. It functions in the pathway purine metabolism; IMP biosynthesis via de novo pathway; N(1)-(5-phospho-D-ribosyl)glycinamide from 5-phospho-alpha-D-ribose 1-diphosphate: step 1/2. With respect to regulation, allosterically regulated; subject to end product regulation by purine nucleotides. Its function is as follows. Catalyzes the formation of phosphoribosylamine from phosphoribosylpyrophosphate (PRPP) and glutamine. The protein is Amidophosphoribosyltransferase of Bacillus subtilis (strain 168).